We begin with the raw amino-acid sequence, 302 residues long: Methionyl-tRNA formyltransferase (302 aa).

108–111 (SLLP) contacts (6S)-5,6,7,8-tetrahydrofolate. Positions 279 to 288 (KRPMEPEEFL) are enriched in basic and acidic residues. Residues 279–302 (KRPMEPEEFLRGFPLPEGSRAHTS) are disordered.

The protein belongs to the Fmt family.

The catalysed reaction is L-methionyl-tRNA(fMet) + (6R)-10-formyltetrahydrofolate = N-formyl-L-methionyl-tRNA(fMet) + (6S)-5,6,7,8-tetrahydrofolate + H(+). Functionally, attaches a formyl group to the free amino group of methionyl-tRNA(fMet). The formyl group appears to play a dual role in the initiator identity of N-formylmethionyl-tRNA by promoting its recognition by IF2 and preventing the misappropriation of this tRNA by the elongation apparatus. The protein is Methionyl-tRNA formyltransferase of Cereibacter sphaeroides (strain ATCC 17023 / DSM 158 / JCM 6121 / CCUG 31486 / LMG 2827 / NBRC 12203 / NCIMB 8253 / ATH 2.4.1.) (Rhodobacter sphaeroides).